Reading from the N-terminus, the 432-residue chain is Teosinte glume architecture 1 (432 aa).

2 disordered regions span residues 20–55 and 68–102; these read HAAAAPSSGGHAANAAAAGTGTESRPPAPGAAGAPA and ECEPGAARREREAAAGAAKRPRPAGPGGQQQQQQC. The segment covering 22–41 has biased composition (low complexity); it reads AAAPSSGGHAANAAAAGTGT. The SBP-type zinc-finger motif lies at 102-179; the sequence is CPSCAVDGCR…DGHNRRRRKP (78 aa). Zn(2+)-binding residues include C105, C110, C127, H130, C146, C149, H153, and C165. Residues 409-420 are compositionally biased toward gly residues; the sequence is GGGSGGGEGSSD. The tract at residues 409 to 432 is disordered; it reads GGGSGGGEGSSDGGTSSSMPFSWQ.

As to quaternary structure, monomer and homodimer. In terms of tissue distribution, strongly expressed in immature ears and weakly in husks. Found in the inflorescence meristem of the developing ear, in the spikelet pair primordia, the glume primordia, the cupule forming region and other floral organs. Not detected in other tissues.

Functionally, SBP transcriptional regulator probably involved in the domestication of maize. Acts as a transcriptional repressor binding to a 5'-GTAC-3' motif. May repress the growth of lateral branches in length and numbers. The chain is Teosinte glume architecture 1 from Zea mays (Maize).